The following is a 183-amino-acid chain: Heavy metal-associated isoprenylated plant protein 44 (183 aa).

Positions 50-113 (LQTVELKVRM…AVRRAGKRAE (64 aa)) constitute an HMA domain. A metal cation contacts are provided by C61 and C64. Residue C180 is modified to Cysteine methyl ester. C180 carries the S-farnesyl cysteine lipid modification. Residues 181–183 (RLM) constitute a propeptide, removed in mature form.

Belongs to the HIPP family.

Its function is as follows. Heavy-metal-binding protein. The protein is Heavy metal-associated isoprenylated plant protein 44 of Arabidopsis thaliana (Mouse-ear cress).